The following is a 307-amino-acid chain: tRNA dimethylallyltransferase (307 aa).

Residue 9-16 (GPTAVGKT) coordinates ATP. Substrate is bound at residue 11–16 (TAVGKT). The interaction with substrate tRNA stretch occupies residues 34-37 (DSMQ).

This sequence belongs to the IPP transferase family. As to quaternary structure, monomer. The cofactor is Mg(2+).

It catalyses the reaction adenosine(37) in tRNA + dimethylallyl diphosphate = N(6)-dimethylallyladenosine(37) in tRNA + diphosphate. Functionally, catalyzes the transfer of a dimethylallyl group onto the adenine at position 37 in tRNAs that read codons beginning with uridine, leading to the formation of N6-(dimethylallyl)adenosine (i(6)A). This Limosilactobacillus reuteri (strain DSM 20016) (Lactobacillus reuteri) protein is tRNA dimethylallyltransferase.